The following is a 98-amino-acid chain: NADH-ubiquinone oxidoreductase chain 4L (98 aa).

3 helical membrane passes run 1-21, 29-49, and 59-79; these read MTPV…GLAF, ALLC…LWAL, and APML…ALLV.

Belongs to the complex I subunit 4L family.

It localises to the mitochondrion membrane. It catalyses the reaction a ubiquinone + NADH + 5 H(+)(in) = a ubiquinol + NAD(+) + 4 H(+)(out). Core subunit of the mitochondrial membrane respiratory chain NADH dehydrogenase (Complex I) which catalyzes electron transfer from NADH through the respiratory chain, using ubiquinone as an electron acceptor. Part of the enzyme membrane arm which is embedded in the lipid bilayer and involved in proton translocation. The chain is NADH-ubiquinone oxidoreductase chain 4L (MT-ND4L) from Carassius auratus (Goldfish).